Reading from the N-terminus, the 487-residue chain is Probable nuclear hormone receptor HR3 (487 aa).

The segment at residues 48–123 is a DNA-binding region (nuclear receptor); it reads IIPCKVCGDK…LGMSRDAVKF (76 aa). NR C4-type zinc fingers lie at residues 51–71 and 87–111; these read CKVC…CEGC and CPRN…LQKC. The disordered stretch occupies residues 145–176; that stretch reads MRAQSDAAPDSSVYDTQTPSSSDQLHHNNYNS. Residues 157–167 are compositionally biased toward polar residues; the sequence is VYDTQTPSSSD. The 244-residue stretch at 237–480 folds into the NR LBD domain; that stretch reads INDVLIKTLA…PALYKELFSI (244 aa).

Belongs to the nuclear hormone receptor family. NR1 subfamily.

The protein resides in the nucleus. Functionally, putative receptor whose ligand is not yet known. The polypeptide is Probable nuclear hormone receptor HR3 (Drosophila melanogaster (Fruit fly)).